A 621-amino-acid chain; its full sequence is Microbial serine proteinase (621 aa).

Residues 1–24 (MRKTSLALAISALLSALPIASVQA) form the signal peptide. Residues 68-440 (PRGGMAGNDL…FGLVDVNKTQ (373 aa)) form the Peptidase S8 domain. Asp-98 acts as the Charge relay system in catalysis. The tract at residues 114-133 (PGSKNVVTGGSDPTPTDPDR) is disordered. Catalysis depends on charge relay system residues His-137 and Ser-354. The region spanning 454 to 619 (AVALAKGKGN…GYSVLGHDAA (166 aa)) is the P/Homo B domain. Positions 457–485 (LAKGKGNGRSPSAPSRYVGSSPTRSSTQV) are disordered. The span at 465–485 (RSPSAPSRYVGSSPTRSSTQV) shows a compositional bias: polar residues.

The protein belongs to the peptidase S8 family.

In terms of biological role, agent of furonculosis. This is Microbial serine proteinase (aspA) from Aeromonas salmonicida.